Reading from the N-terminus, the 204-residue chain is Ribosomal RNA small subunit methyltransferase G (204 aa).

S-adenosyl-L-methionine contacts are provided by residues Gly-69, Phe-74, Ile-123–Glu-124, and Arg-137.

This sequence belongs to the methyltransferase superfamily. RNA methyltransferase RsmG family.

The protein resides in the cytoplasm. The enzyme catalyses guanosine(527) in 16S rRNA + S-adenosyl-L-methionine = N(7)-methylguanosine(527) in 16S rRNA + S-adenosyl-L-homocysteine. Functionally, specifically methylates the N7 position of guanine in position 527 of 16S rRNA. In Ruegeria pomeroyi (strain ATCC 700808 / DSM 15171 / DSS-3) (Silicibacter pomeroyi), this protein is Ribosomal RNA small subunit methyltransferase G.